We begin with the raw amino-acid sequence, 348 residues long: Phosphate acyltransferase (348 aa).

It belongs to the PlsX family. Homodimer. Probably interacts with PlsY.

The protein resides in the cytoplasm. The catalysed reaction is a fatty acyl-[ACP] + phosphate = an acyl phosphate + holo-[ACP]. Its pathway is lipid metabolism; phospholipid metabolism. In terms of biological role, catalyzes the reversible formation of acyl-phosphate (acyl-PO(4)) from acyl-[acyl-carrier-protein] (acyl-ACP). This enzyme utilizes acyl-ACP as fatty acyl donor, but not acyl-CoA. In Nitrosomonas europaea (strain ATCC 19718 / CIP 103999 / KCTC 2705 / NBRC 14298), this protein is Phosphate acyltransferase.